A 153-amino-acid chain; its full sequence is Probable ubiquitin-conjugating enzyme E2 C (153 aa).

The UBC core domain maps to 6–153 (SVSKRLQSEL…KRYQEATSRP (148 aa)). Catalysis depends on C90, which acts as the Glycyl thioester intermediate.

It belongs to the ubiquitin-conjugating enzyme family. As to quaternary structure, component of the APC/C complex. In terms of processing, autoubiquitinated by the APC/C complex, leading to its degradation by the proteasome.

The enzyme catalyses S-ubiquitinyl-[E1 ubiquitin-activating enzyme]-L-cysteine + [E2 ubiquitin-conjugating enzyme]-L-cysteine = [E1 ubiquitin-activating enzyme]-L-cysteine + S-ubiquitinyl-[E2 ubiquitin-conjugating enzyme]-L-cysteine.. Its pathway is protein modification; protein ubiquitination. Catalyzes the covalent attachment of ubiquitin to other proteins. Acts as an essential factor of the anaphase promoting complex/cyclosome (APC/C), a cell cycle-regulated ubiquitin ligase that controls progression through mitosis. Acts by initiating polyubiquitin chains on APC/C substrates, leading to the degradation of APC/C substrates by the proteasome and promoting mitotic exit. This is Probable ubiquitin-conjugating enzyme E2 C (ube2c) from Dictyostelium discoideum (Social amoeba).